A 224-amino-acid chain; its full sequence is 7-cyano-7-deazaguanine synthase (224 aa).

12-22 (LSGGLDSSTVT) contacts ATP. Zn(2+) is bound by residues Cys-193, Cys-201, Cys-204, and Cys-207.

It belongs to the QueC family. Zn(2+) is required as a cofactor.

The catalysed reaction is 7-carboxy-7-deazaguanine + NH4(+) + ATP = 7-cyano-7-deazaguanine + ADP + phosphate + H2O + H(+). Its pathway is purine metabolism; 7-cyano-7-deazaguanine biosynthesis. Its function is as follows. Catalyzes the ATP-dependent conversion of 7-carboxy-7-deazaguanine (CDG) to 7-cyano-7-deazaguanine (preQ(0)). The chain is 7-cyano-7-deazaguanine synthase from Prochlorococcus marinus (strain MIT 9312).